We begin with the raw amino-acid sequence, 678 residues long: Dihydroxyacetone phosphate acyltransferase (678 aa).

Phosphoserine is present on residues S12 and S17. An HXXXXD motif motif is present at residues 161–166 (HRSYID). An N6-acetyllysine modification is found at K641. Positions 676 to 678 (AKL) match the Microbody targeting signal motif.

Belongs to the GPAT/DAPAT family. As to quaternary structure, part of a heterotrimeric complex composed of GNPAT, AGPS and a modified form of GNPAT. In terms of tissue distribution, highly expressed in liver and testis. Lower levels in heart, brain, lung and kidney. Detected in spleen.

The protein localises to the peroxisome membrane. The catalysed reaction is dihydroxyacetone phosphate + an acyl-CoA = a 1-acylglycerone 3-phosphate + CoA. It carries out the reaction dihydroxyacetone phosphate + hexadecanoyl-CoA = 1-hexadecanoylglycerone 3-phosphate + CoA. Its pathway is membrane lipid metabolism; glycerophospholipid metabolism. Dihydroxyacetonephosphate acyltransferase catalyzing the first step in the biosynthesis of plasmalogens, a subset of phospholipids that differ from other glycerolipids by having an alkyl chain attached through a vinyl ether linkage at the sn-1 position of the glycerol backbone, and which unique physical properties have an impact on various aspects of cell signaling and membrane biology. The protein is Dihydroxyacetone phosphate acyltransferase of Mus musculus (Mouse).